The primary structure comprises 310 residues: UPF0282 protein PF0593 (310 aa).

This sequence belongs to the UPF0282 family.

This Pyrococcus furiosus (strain ATCC 43587 / DSM 3638 / JCM 8422 / Vc1) protein is UPF0282 protein PF0593.